A 186-amino-acid polypeptide reads, in one-letter code: Adenine phosphoribosyltransferase (186 aa).

Belongs to the purine/pyrimidine phosphoribosyltransferase family. In terms of assembly, homodimer.

The protein resides in the cytoplasm. The catalysed reaction is AMP + diphosphate = 5-phospho-alpha-D-ribose 1-diphosphate + adenine. The protein operates within purine metabolism; AMP biosynthesis via salvage pathway; AMP from adenine: step 1/1. Functionally, catalyzes a salvage reaction resulting in the formation of AMP, that is energically less costly than de novo synthesis. The protein is Adenine phosphoribosyltransferase of Xanthomonas euvesicatoria pv. vesicatoria (strain 85-10) (Xanthomonas campestris pv. vesicatoria).